The following is a 370-amino-acid chain: Dual-specificity RNA methyltransferase RlmN (370 aa).

The active-site Proton acceptor is the glutamate 93. A Radical SAM core domain is found at 99-331; that stretch reads DRKRGTLCVS…TRVRRTRGDD (233 aa). Cysteine 106 and cysteine 336 form a disulfide bridge. Residues cysteine 113, cysteine 117, and cysteine 120 each contribute to the [4Fe-4S] cluster site. S-adenosyl-L-methionine contacts are provided by residues 162 to 163, serine 194, 216 to 218, and asparagine 293; these read GE and SLH. Cysteine 336 (S-methylcysteine intermediate) is an active-site residue.

The protein belongs to the radical SAM superfamily. RlmN family. The cofactor is [4Fe-4S] cluster.

It localises to the cytoplasm. The catalysed reaction is adenosine(2503) in 23S rRNA + 2 reduced [2Fe-2S]-[ferredoxin] + 2 S-adenosyl-L-methionine = 2-methyladenosine(2503) in 23S rRNA + 5'-deoxyadenosine + L-methionine + 2 oxidized [2Fe-2S]-[ferredoxin] + S-adenosyl-L-homocysteine. It catalyses the reaction adenosine(37) in tRNA + 2 reduced [2Fe-2S]-[ferredoxin] + 2 S-adenosyl-L-methionine = 2-methyladenosine(37) in tRNA + 5'-deoxyadenosine + L-methionine + 2 oxidized [2Fe-2S]-[ferredoxin] + S-adenosyl-L-homocysteine. Functionally, specifically methylates position 2 of adenine 2503 in 23S rRNA and position 2 of adenine 37 in tRNAs. m2A2503 modification seems to play a crucial role in the proofreading step occurring at the peptidyl transferase center and thus would serve to optimize ribosomal fidelity. This chain is Dual-specificity RNA methyltransferase RlmN, found in Coxiella burnetii (strain RSA 493 / Nine Mile phase I).